A 72-amino-acid chain; its full sequence is Small ribosomal subunit protein eS17 (72 aa).

It belongs to the eukaryotic ribosomal protein eS17 family.

In Nanoarchaeum equitans (strain Kin4-M), this protein is Small ribosomal subunit protein eS17.